The primary structure comprises 52 residues: UPF0391 membrane protein ABAYE0050 (52 aa).

The next 2 helical transmembrane spans lie at 6 to 26 and 30 to 50; these read IIFA…VAGL and FAVI…ISRG.

It belongs to the UPF0391 family.

Its subcellular location is the cell membrane. The protein is UPF0391 membrane protein ABAYE0050 of Acinetobacter baumannii (strain AYE).